Here is a 66-residue protein sequence, read N- to C-terminus: Large ribosomal subunit protein bL33c (66 aa).

Belongs to the bacterial ribosomal protein bL33 family.

It localises to the plastid. It is found in the chloroplast. The chain is Large ribosomal subunit protein bL33c from Physcomitrium patens (Spreading-leaved earth moss).